The chain runs to 340 residues: 4-hydroxythreonine-4-phosphate dehydrogenase (340 aa).

2 residues coordinate substrate: His141 and Thr142. 3 residues coordinate a divalent metal cation: His177, His222, and His277. Residues Lys285, Asn294, and Arg303 each coordinate substrate.

It belongs to the PdxA family. As to quaternary structure, homodimer. Zn(2+) is required as a cofactor. Mg(2+) serves as cofactor. The cofactor is Co(2+).

It localises to the cytoplasm. The catalysed reaction is 4-(phosphooxy)-L-threonine + NAD(+) = 3-amino-2-oxopropyl phosphate + CO2 + NADH. The protein operates within cofactor biosynthesis; pyridoxine 5'-phosphate biosynthesis; pyridoxine 5'-phosphate from D-erythrose 4-phosphate: step 4/5. In terms of biological role, catalyzes the NAD(P)-dependent oxidation of 4-(phosphooxy)-L-threonine (HTP) into 2-amino-3-oxo-4-(phosphooxy)butyric acid which spontaneously decarboxylates to form 3-amino-2-oxopropyl phosphate (AHAP). This chain is 4-hydroxythreonine-4-phosphate dehydrogenase, found in Maricaulis maris (strain MCS10) (Caulobacter maris).